A 194-amino-acid polypeptide reads, in one-letter code: Cupin-domain-containing oxidoreductase virC (194 aa).

The Cupin type-2 domain occupies 106-175 (IDFAPNVISP…GTLPGRMMWV (70 aa)).

The protein belongs to the virC family.

Its pathway is secondary metabolite biosynthesis. In terms of biological role, cupin-domain-containing oxidoreductase; part of the gene cluster that mediates the biosynthesis of virensols and trichoxide, fungal natural products that contain or are derived from a salicylaldehyde core. The pathway begins with the synthesis of the reduced chain in virensol C by the highly reducing polyketide synthase virA via condensation of one acetate and 8 malonate units. VirA has interesting programming rules since the first 2 ketides are fully reduced, the 3 following ketides undergo beta-dehydration, and the last 3 ketides are only reduced to beta-hydroxys to yield the trihydroxy portion. The production of aldehyde virensol C by virA alone is surprising, since virA does not contain a reductase (R) domain that is typically associated with reductive product release in HRPKS. The cupin-domain enzyme virC is involved in enhancing virA product turnover. The short-chain dehydrogenase virB then oxidizes the C-7 alcohol of virensol C to a ketone, yielding virensol D. Virensol D is further transformed to salicylaldehyde 5-deoxyaurocitrin by the short-chain dehydrogenase virD. VirD catalyzes the dehydrogenation of C-3 to form the beta-ketone aldehyde, which is followed by the generation of the nucleophilic C-2 that is required for the intramolecular aldol condensation between C-2 and C-7, itself followed by dehydration and aromatization which leads to salicylaldehyde 5-deoxyaurocitrin. While the dehydrogenation of virensol D is definitely catalyzed by virD, the aldol condensation and dehydration may be uncatalyzed or assisted by virD. The short chain dehydrogenase virG then converts salicylaldehyde 5-deoxyaurocitrin into virensol B which is further hydroxylated by the cytochrome P450 monooxygenase virE to yield the hydroquinone virensol A. VirI then may oxidize virensol A to form the quinone, while virH performs the epoxidation. Finally, the two remaining short-chain dehydrogenases, virK and virL, are probably responsible for reducing the ketones to the corresponding alcohols to furnish the epoxycyclohexanol structure in trichoxide. In Hypocrea virens (strain Gv29-8 / FGSC 10586) (Gliocladium virens), this protein is Cupin-domain-containing oxidoreductase virC.